The primary structure comprises 408 residues: Homogentisate geranylgeranyltransferase (408 aa).

The N-terminal 62 residues, 1–62 (MQAVTAAAAA…TVMHKFSAIS (62 aa)), are a transit peptide targeting the chloroplast. The next 9 helical transmembrane spans lie at 122 to 142 (HTIF…MKSI), 156 to 176 (ALTA…LYDI), 194 to 214 (SVAT…SIGI), 221 to 241 (LMCA…EAPF), 248 to 268 (ALLA…LAFF), 286 to 306 (LVFA…FKDI), 329 to 349 (VYQL…LVGA), 352 to 372 (TNLF…LTLW), and 386 to 406 (VTSF…LIPF).

It belongs to the UbiA prenyltransferase family. In terms of tissue distribution, expressed in seeds.

The protein resides in the plastid. It localises to the chloroplast membrane. It carries out the reaction homogentisate + (2E,6E,10E)-geranylgeranyl diphosphate + H(+) = 6-geranylgeranyl-2-methylbenzene-1,4-diol + CO2 + diphosphate. The protein operates within cofactor biosynthesis; tocopherol biosynthesis. Functionally, involved in the synthesis of tocotrienol (vitamin E). Catalyzes the condensation of homogentisate and geranylgeranyl diphosphate to form 2-methyl-6-geranylgeranylbenzoquinol. Possesses low activity with phytyl diphosphate as substrate. This is Homogentisate geranylgeranyltransferase from Hordeum vulgare (Barley).